The sequence spans 594 residues: 3-hydroxy-3-methylglutaryl coenzyme A reductase 2-A (594 aa).

The disordered stretch occupies residues 1 to 32 (MDVRRRPVKSLSSAKTATAGEPPKSQQQHPKA). The Lumenal portion of the chain corresponds to 1-37 (MDVRRRPVKSLSSAKTATAGEPPKSQQQHPKASDALP). Residues 38–58 (LPLYLTNGLFFTMFFSVMYFL) traverse the membrane as a helical segment. Topologically, residues 59–81 (LHRWREKIRNSTPLHVVTLSELA) are cytoplasmic. Residues 82-102 (ALVLLMASVIYLLGFFGIGFV) form a helical membrane-spanning segment. Over 103–549 (RSVIRPSPDA…SKESPGSNSR (447 aa)) the chain is Lumenal. Asn261 carries N-linked (GlcNAc...) asparagine glycosylation. Glu273 serves as the catalytic Charge relay system. Residue Asn337 is glycosylated (N-linked (GlcNAc...) asparagine). Residues Lys405 and Asp481 each act as charge relay system in the active site. Residues 550–570 (LLASIVAGSVLAGELSLMSAL) traverse the membrane as a helical segment. Over 571–594 (AAGQLVKSHMKYNRSSKDITKLSS) the chain is Cytoplasmic. His579 (proton donor) is an active-site residue.

It belongs to the HMG-CoA reductase family. Mostly expressed in the petioles of seedlings, seedlings and roots, and, to a lower extent, in seeds, leaves, stems and flowers.

The protein resides in the endoplasmic reticulum membrane. It is found in the plastid. The protein localises to the chloroplast membrane. Its subcellular location is the peroxisome membrane. The enzyme catalyses (R)-mevalonate + 2 NADP(+) + CoA = (3S)-3-hydroxy-3-methylglutaryl-CoA + 2 NADPH + 2 H(+). It functions in the pathway metabolic intermediate biosynthesis; (R)-mevalonate biosynthesis; (R)-mevalonate from acetyl-CoA: step 3/3. Its activity is regulated as follows. Competitive inhibition by mevinolin (Mev) is leading to a significant reduction of total ginsenoside in adventitious roots. Triggered by darkness. Functionally, catalyzes the synthesis of mevalonate, the specific precursor of all isoprenoid compounds present in plants. Component of the triterpene saponins (e.g. ginsenosides or panaxosides) and phytosterols biosynthetic pathways. The chain is 3-hydroxy-3-methylglutaryl coenzyme A reductase 2-A from Panax ginseng (Korean ginseng).